Reading from the N-terminus, the 156-residue chain is MSRRHSAEKREVLPDPKFGNVVITKFMNSVMYAGKKSVAEGIVYGALDLIEAKTRQGPLTVFEQALENVMPTIEVRSRRVGGATYQVPVEVRSTRRQALGIRWLIAAARGRNEKTMTERLSAELLDASNNRGSAVKKREDVHKMAEANRAFSHYRW.

Belongs to the universal ribosomal protein uS7 family. Part of the 30S ribosomal subunit. Contacts proteins S9 and S11.

Functionally, one of the primary rRNA binding proteins, it binds directly to 16S rRNA where it nucleates assembly of the head domain of the 30S subunit. Is located at the subunit interface close to the decoding center, probably blocks exit of the E-site tRNA. The protein is Small ribosomal subunit protein uS7 of Nitrobacter hamburgensis (strain DSM 10229 / NCIMB 13809 / X14).